A 99-amino-acid polypeptide reads, in one-letter code: Antitoxin VapB47 (99 aa).

The protein belongs to the phD/YefM antitoxin family.

Functionally, antitoxin component of a type II toxin-antitoxin (TA) system. In Mycobacterium tuberculosis (strain CDC 1551 / Oshkosh), this protein is Antitoxin VapB47 (vapB47).